The following is a 137-amino-acid chain: Cofilin (137 aa).

One can recognise an ADF-H domain in the interval 5–135 (GVKVSPECLE…AYETVLEKVT (131 aa)).

The protein belongs to the actin-binding proteins ADF family.

The protein localises to the cytoplasm. It is found in the cytoskeleton. The protein resides in the nucleus matrix. Its function is as follows. Controls reversibly actin polymerization and depolymerization in a pH-sensitive manner. It has the ability to bind G- and F-actin in a 1:1 ratio of cofilin to actin. Binding to F-actin is regulated by tropomyosin. It is the major component of intranuclear and cytoplasmic actin rods. Required for accumulation of actin at the cell division site via depolymerizing actin at the cell ends. In association with myosin II has a role in the assembly of the contractile ring via severing actin filaments. Involved in the maintenance of the contractile ring once formed. In association with profilin and capping protein, has a role in the mitotic reorganization of the actin cytoskeleton. Severs actin filaments (F-actin). In Schizosaccharomyces pombe (strain 972 / ATCC 24843) (Fission yeast), this protein is Cofilin (cof1).